The primary structure comprises 227 residues: MTSVLIVEDEESLADPLAFLLRKEGFEATVVTDGPAALAEFDRAGADIVLLDLMLPGMSGTDVCKQLRARSSVPVIMVTARDSEIDKVVGLELGADDYVTKPYSARELIARIRAVLRRGGDDDSEMSDGVLESGPVRMDVERHVVSVNGDTITLPLKEFDLLEYLMRNSGRVLTRGQLIDRVWGADYVGDTKTLDVHVKRLRSKIEADPANPVHLVTVRGLGYKLEG.

Positions 3–116 constitute a Response regulatory domain; that stretch reads SVLIVEDEES…ELIARIRAVL (114 aa). A 4-aspartylphosphate modification is found at Asp52. A DNA-binding region (ompR/PhoB-type) is located at residues 128–227; it reads DGVLESGPVR…VRGLGYKLEG (100 aa).

In terms of processing, phosphorylated by SenX3.

Its function is as follows. Member of the two-component regulatory system SenX3/RegX3. Specifically binds to the promoter region of the senX3-regX3 operon. This chain is Sensory transduction protein RegX3, found in Mycobacterium bovis (strain ATCC BAA-935 / AF2122/97).